The sequence spans 183 residues: Putative 3-methyladenine DNA glycosylase (183 aa).

This sequence belongs to the DNA glycosylase MPG family.

This chain is Putative 3-methyladenine DNA glycosylase, found in Rickettsia peacockii (strain Rustic).